A 306-amino-acid chain; its full sequence is SPbeta prophage-derived uncharacterized protein YonG (306 aa).

The polypeptide is SPbeta prophage-derived uncharacterized protein YonG (yonG) (Bacillus subtilis (strain 168)).